The sequence spans 157 residues: Protein Smg (157 aa).

The protein belongs to the Smg family.

The sequence is that of Protein Smg from Escherichia coli O7:K1 (strain IAI39 / ExPEC).